The primary structure comprises 928 residues: ATP-dependent DNA helicase PIF5 (928 aa).

The transit peptide at 1 to 49 directs the protein to the mitochondrion; the sequence is MLSRLSAVWRPSRVALRIQRVDFTTCGNRLNRSTQPNEPPLVSGIAARS. Disordered stretches follow at residues 29-141 and 176-231; these read RLNR…DVAI and LRAK…FSDA. Over residues 52 to 61 the composition is skewed to basic and acidic residues; the sequence is AKAEPVEKRG. ATP is bound at residue 264–271; that stretch reads GGAGSGKS. Disordered regions lie at residues 389 to 421, 481 to 513, 545 to 572, and 585 to 607; these read PIPP…APSK, KSSA…AAAE, IYPS…EDTM, and STHE…SQPW. The segment covering 550-566 has biased composition (polar residues); the sequence is NDGSSQQTGSSNGANSV. A DNA-binding region spans residues 858 to 877; it reads QAYVALSRSTRLDNIRLLDF. The interval 898-928 is disordered; that stretch reads EELDNEIEDDGTEGDEEALEGDGEYEGEVEE.

It belongs to the helicase family. PIF1 subfamily. In terms of assembly, monomer. Requires Mg(2+) as cofactor.

The protein resides in the mitochondrion. The catalysed reaction is Couples ATP hydrolysis with the unwinding of duplex DNA at the replication fork by translocating in the 5'-3' direction. This creates two antiparallel DNA single strands (ssDNA). The leading ssDNA polymer is the template for DNA polymerase III holoenzyme which synthesizes a continuous strand.. It catalyses the reaction ATP + H2O = ADP + phosphate + H(+). Its function is as follows. DNA-dependent ATPase and 5'-3' DNA helicase required for the maintenance of mitochondrial (kinetoplast) genome stability. Involved in processing of minicircle Okazaki fragments. In Trypanosoma brucei brucei (strain 927/4 GUTat10.1), this protein is ATP-dependent DNA helicase PIF5.